The chain runs to 553 residues: Ergothioneine transport permease/ergothioneine binding protein EgtU (553 aa).

An ABC transmembrane type-1 domain is found at 57–236 (LAQHFIIVAL…LFSVLADKFV (180 aa)). The next 6 helical transmembrane spans lie at 61–81 (FIIV…IGVF), 98–118 (FLYT…IGVG), 122–142 (ALLV…YNAL), 182–202 (IAVV…AGGL), 219–239 (VAGS…VSVF), and 261–281 (VYTN…WLIP). Topologically, residues 282–553 (RNAIEEKPLV…AKDFLERLGL (272 aa)) are periplasmic. The tract at residues 288–549 (KPLVVATKPS…PKIVAKDFLE (262 aa)) is ergothioneine binding domain.

The protein in the N-terminal section; belongs to the binding-protein-dependent transport system permease family. In the C-terminal section; belongs to the OsmX family. As to quaternary structure, the complex is composed of two ATP-binding proteins (EgtV) and two transmembrane proteins (EgtU).

Its subcellular location is the cell inner membrane. Its function is as follows. Part of the ABC transporter complex EgtUV involved in the uptake of ergothioneine (EGT), a natural low-molecular weight (LMW) thiol antioxidant which protects H.pylori against bleach stress. Responsible for the translocation of the substrate across the membrane. Also contains a C-terminal periplasmic solute-binding domain (SBD) which binds to ergothioneine with low-micromolar affinity. Cannot bind the structurally similar compounds glycine betaine, choline, proline, carnitine or histidine. This is Ergothioneine transport permease/ergothioneine binding protein EgtU from Helicobacter pylori (strain G27).